We begin with the raw amino-acid sequence, 215 residues long: 3-dehydroquinate dehydratase (215 aa).

3-dehydroquinate is bound by residues 27–29 and Arg54; that span reads ELR. The active-site Proton donor/acceptor is the His112. The active-site Schiff-base intermediate with substrate is Lys139. Residues Arg176 and Gln198 each coordinate 3-dehydroquinate.

Belongs to the type-I 3-dehydroquinase family. Homodimer.

It catalyses the reaction 3-dehydroquinate = 3-dehydroshikimate + H2O. It participates in metabolic intermediate biosynthesis; chorismate biosynthesis; chorismate from D-erythrose 4-phosphate and phosphoenolpyruvate: step 3/7. Involved in the third step of the chorismate pathway, which leads to the biosynthesis of aromatic amino acids. Catalyzes the cis-dehydration of 3-dehydroquinate (DHQ) and introduces the first double bond of the aromatic ring to yield 3-dehydroshikimate. The chain is 3-dehydroquinate dehydratase from Pyrococcus abyssi (strain GE5 / Orsay).